Here is a 463-residue protein sequence, read N- to C-terminus: Type IV secretion system protein PtlD (463 aa).

A signal peptide spans 1–24; sequence MAGLSRILLSCTLACLLAGQAAQA. The next 5 membrane-spanning stretches (helical) occupy residues 118-138, 232-252, 253-273, 294-314, and 333-353; these read LQPL…YALL, WLLC…LAAS, LLIV…LFLV, ALVF…VLAG, and MLAA…VPLA. A compositionally biased stretch (low complexity) spans 376–410; sequence AHRQAAARQYAPRPAAAAAAAGPHQAGTYAASATP. The segment at 376 to 463 is disordered; the sequence is AHRQAAARQY…RVLPRKPNLP (88 aa). Pro residues predominate over residues 411–420; sequence APAPARPAPS. Residues 441 to 455 are compositionally biased toward basic and acidic residues; it reads VRRDDRPAPAPDRRV.

Its subcellular location is the cell membrane. Component of the type IV secretion system ptl required for secretion of assembled pertussis toxin (PTX) through the outer membrane. The polypeptide is Type IV secretion system protein PtlD (ptlD) (Bordetella pertussis (strain Tohama I / ATCC BAA-589 / NCTC 13251)).